The sequence spans 380 residues: Omega-3 fatty acid desaturase, endoplasmic reticulum (380 aa).

A helical membrane pass occupies residues 59–78; sequence VLVVTALAASAISFNSWFFW. The Histidine box-1 motif lies at 97–101; it reads HDCGH. The Histidine box-2 motif lies at 133–137; that stretch reads HRTHH. Helical transmembrane passes span 208–231 and 238–256; these read GVVTSTLCWGIVLSVLLYLSLTIG and LYGVPYLIFVMWLDFVTYL. Residues 300 to 304 carry the Histidine box-3 motif; the sequence is HVIHH.

This sequence belongs to the fatty acid desaturase type 1 family.

The protein resides in the endoplasmic reticulum membrane. The protein operates within lipid metabolism; polyunsaturated fatty acid biosynthesis. Functionally, microsomal (ER) omega-3 fatty acid desaturase introduces the third double bond in the biosynthesis of 18:3 fatty acids, important constituents of plant membranes. It is thought to use cytochrome b5 as an electron donor and to act on fatty acids esterified to phosphatidylcholine and, possibly, other phospholipids. This chain is Omega-3 fatty acid desaturase, endoplasmic reticulum (ARG1), found in Vigna radiata var. radiata (Mung bean).